The sequence spans 139 residues: Small ribosomal subunit protein uS12m (139 aa).

The transit peptide at M1–S29 directs the protein to the mitochondrion.

This sequence belongs to the universal ribosomal protein uS12 family. Component of the mitochondrial ribosome small subunit (28S) which comprises a 12S rRNA and about 30 distinct proteins.

It localises to the mitochondrion. This chain is Small ribosomal subunit protein uS12m (Mrps12), found in Mus musculus (Mouse).